The following is a 164-amino-acid chain: C-phycoerythrin alpha chain (164 aa).

(2R,3E)-phycoerythrobilin contacts are provided by C82 and C139.

Belongs to the phycobiliprotein family. In terms of assembly, heterodimer of an alpha and a beta chain. Contains two covalently linked bilin chromophores.

The protein localises to the cellular thylakoid membrane. Functionally, light-harvesting photosynthetic bile pigment-protein from the phycobiliprotein complex. This Pseudanabaena tenuis (strain PCC 7409) protein is C-phycoerythrin alpha chain (cpeA).